The sequence spans 483 residues: Nuc-1 negative regulatory protein preg (483 aa).

3 stretches are compositionally biased toward low complexity: residues 1–32 (MLTR…PRPS), 60–80 (SSRR…PISI), and 176–200 (ASAL…AVAV). Disordered stretches follow at residues 1–112 (MLTR…SRPQ), 164–234 (NTVG…SQGD), and 434–483 (CPEP…RHAT). A compositionally biased stretch (acidic residues) spans 435–473 (PEPEEADDEDEDEELDESDAIGDDDDDIDGEGGEREEET).

Belongs to the cyclin family.

Negative regulator, together with pgov, of the transcriptional activator nuc-1, which controls the expression of phosphorous acquisition enzymes. The sequence is that of Nuc-1 negative regulatory protein preg (preg) from Neurospora crassa (strain ATCC 24698 / 74-OR23-1A / CBS 708.71 / DSM 1257 / FGSC 987).